A 205-amino-acid chain; its full sequence is N-(5'-phosphoribosyl)anthranilate isomerase (205 aa).

This sequence belongs to the TrpF family.

The catalysed reaction is N-(5-phospho-beta-D-ribosyl)anthranilate = 1-(2-carboxyphenylamino)-1-deoxy-D-ribulose 5-phosphate. It functions in the pathway amino-acid biosynthesis; L-tryptophan biosynthesis; L-tryptophan from chorismate: step 3/5. The chain is N-(5'-phosphoribosyl)anthranilate isomerase from Thermotoga petrophila (strain ATCC BAA-488 / DSM 13995 / JCM 10881 / RKU-1).